Reading from the N-terminus, the 141-residue chain is MKTARRRSRELAVQAVYQSLINRTAAPEIAKNIREMPDFAKADEELFNKLFFGTQTNAADYIQKIRPLLDRDEKDLNPIERAVLLTACHELSAMPETPYPVIINEAIEVTKTFGGTDGHKFVNGILDKLAAQIRPDEPKRR.

Belongs to the NusB family.

Functionally, involved in transcription antitermination. Required for transcription of ribosomal RNA (rRNA) genes. Binds specifically to the boxA antiterminator sequence of the ribosomal RNA (rrn) operons. The protein is Transcription antitermination protein NusB of Neisseria meningitidis serogroup C (strain 053442).